The chain runs to 305 residues: Glutaminase (305 aa).

Residues Ser-61, Asn-113, Glu-158, Asn-165, Tyr-189, Tyr-241, and Val-259 each contribute to the substrate site.

The protein belongs to the glutaminase family. As to quaternary structure, homotetramer.

It catalyses the reaction L-glutamine + H2O = L-glutamate + NH4(+). The sequence is that of Glutaminase from Clostridium botulinum (strain ATCC 19397 / Type A).